A 684-amino-acid chain; its full sequence is Probable pectin methyltransferase QUA2 (684 aa).

Residues 1–35 (MSMPLQRGISGVRVSDSSDDLRDSQMKDKTERARS) form a disordered region. At 1–86 (MSMPLQRGIS…RHRLMLLFLK (86 aa)) the chain is on the cytoplasmic side. Basic and acidic residues predominate over residues 19 to 35 (DDLRDSQMKDKTERARS). Residues 87–107 (ISLVLIVVIALAGSFWWTISI) form a helical; Signal-anchor for type II membrane protein membrane-spanning segment. At 108–684 (STSSRGHVYH…QKPFTKRQSI (577 aa)) the chain is on the lumenal side. N-linked (GlcNAc...) asparagine glycosylation is found at N161 and N476.

This sequence belongs to the methyltransferase superfamily. As to expression, ubiquitous.

The protein resides in the golgi apparatus membrane. It participates in glycan metabolism; pectin biosynthesis. Its function is as follows. May be involved in the synthesis of homogalacturonan. Required for normal cell adhesion and plant development. The polypeptide is Probable pectin methyltransferase QUA2 (QUA2) (Arabidopsis thaliana (Mouse-ear cress)).